The primary structure comprises 297 residues: Probable endonuclease 4 (297 aa).

His68, His109, Glu144, Asp178, His181, His213, Asp226, His228, and Glu258 together coordinate Zn(2+).

This sequence belongs to the AP endonuclease 2 family. Zn(2+) serves as cofactor.

It catalyses the reaction Endonucleolytic cleavage to 5'-phosphooligonucleotide end-products.. Endonuclease IV plays a role in DNA repair. It cleaves phosphodiester bonds at apurinic or apyrimidinic (AP) sites, generating a 3'-hydroxyl group and a 5'-terminal sugar phosphate. This is Probable endonuclease 4 from Enterococcus faecalis (strain ATCC 700802 / V583).